A 452-amino-acid polypeptide reads, in one-letter code: Keratin, type II cytoskeletal 80 (452 aa).

A head region spans residues 1–82 (MAYRSCVVGF…DPAVQQQKNQ (82 aa)). Residue S45 is modified to Phosphoserine. Residues 82–118 (QEKEEMKVLNDKFASLIGKVQALEQRNQLLETRWGFL) form a coil 1A region. Residues 83–394 (EKEEMKVLND…KLMEGEESRM (312 aa)) form the IF rod domain. The segment at 119 to 135 (QGQGSATFDLSHHYETF) is linker 1. Residues 136–227 (QGRLQEELRK…TVYEQELKDL (92 aa)) are coil 1B. The segment at 228-251 (TAQVKDVSVTVGLDSRCHIDLSGI) is linker 12. Residues 252–390 (VEEVKAQYDA…ATYHKLMEGE (139 aa)) form a coil 2 region. The tail stretch occupies residues 391-452 (ESRMDLPSTT…YLSQESEASE (62 aa)). 2 stretches are compositionally biased toward polar residues: residues 411–421 (TTASKSGLSKT) and 443–452 (YLSQESEASE). The interval 411-452 (TTASKSGLSKTPSRKKKNRGGPVIKITEMSEKYLSQESEASE) is disordered.

Belongs to the intermediate filament family. Heterotetramer of two type I and two type II keratins.

In Rattus norvegicus (Rat), this protein is Keratin, type II cytoskeletal 80 (Krt80).